The following is a 256-amino-acid chain: Probable hydroxyacylglutathione hydrolase glo2 (256 aa).

Residues H63, H65, D67, H68, H118, and D139 each contribute to the Zn(2+) site. Residues R148, H178–Y180, and R250–K253 each bind substrate. Residue H178 coordinates Zn(2+).

This sequence belongs to the metallo-beta-lactamase superfamily. Glyoxalase II family. It depends on Zn(2+) as a cofactor.

It localises to the cytoplasm. The protein localises to the nucleus. It carries out the reaction an S-(2-hydroxyacyl)glutathione + H2O = a 2-hydroxy carboxylate + glutathione + H(+). The enzyme catalyses (R)-S-lactoylglutathione + H2O = (R)-lactate + glutathione + H(+). It participates in secondary metabolite metabolism; methylglyoxal degradation; (R)-lactate from methylglyoxal: step 2/2. Functionally, thiolesterase that catalyzes the hydrolysis of S-D-lactoylglutathione to form glutathione and D-lactic acid. Involved in the metabolism of methylglyoxal, a toxic compound for yeast proliferation, by converting methylglyoxal to lactate via S-D-lactoylglutathione by sequential enzyme reactions catalyzed by glyoxalase I and glyoxalase II. The protein is Probable hydroxyacylglutathione hydrolase glo2 (glo2) of Schizosaccharomyces pombe (strain 972 / ATCC 24843) (Fission yeast).